Reading from the N-terminus, the 287-residue chain is Small ribosomal subunit biogenesis GTPase RsgA (287 aa).

One can recognise a CP-type G domain in the interval Ser-61–Leu-218. GTP is bound by residues Asn-110–Asp-113 and Gly-161–Thr-169. The Zn(2+) site is built by Cys-242, Cys-247, His-249, and Cys-255.

The protein belongs to the TRAFAC class YlqF/YawG GTPase family. RsgA subfamily. Monomer. Associates with 30S ribosomal subunit, binds 16S rRNA. Zn(2+) serves as cofactor.

It localises to the cytoplasm. Functionally, one of several proteins that assist in the late maturation steps of the functional core of the 30S ribosomal subunit. Helps release RbfA from mature subunits. May play a role in the assembly of ribosomal proteins into the subunit. Circularly permuted GTPase that catalyzes slow GTP hydrolysis, GTPase activity is stimulated by the 30S ribosomal subunit. The protein is Small ribosomal subunit biogenesis GTPase RsgA of Clostridium perfringens (strain 13 / Type A).